A 197-amino-acid chain; its full sequence is Large ribosomal subunit protein uL13C (197 aa).

The protein belongs to the universal ribosomal protein uL13 family. As to quaternary structure, component of the large ribosomal subunit (LSU). Mature yeast ribosomes consist of a small (40S) and a large (60S) subunit. The 40S small subunit contains 1 molecule of ribosomal RNA (18S rRNA) and at least 33 different proteins. The large 60S subunit contains 3 rRNA molecules (25S, 5.8S and 5S rRNA) and at least 46 different proteins.

The protein localises to the cytoplasm. It is found in the nucleus. Its subcellular location is the nucleolus. Component of the ribosome, a large ribonucleoprotein complex responsible for the synthesis of proteins in the cell. The small ribosomal subunit (SSU) binds messenger RNAs (mRNAs) and translates the encoded message by selecting cognate aminoacyl-transfer RNA (tRNA) molecules. The large subunit (LSU) contains the ribosomal catalytic site termed the peptidyl transferase center (PTC), which catalyzes the formation of peptide bonds, thereby polymerizing the amino acids delivered by tRNAs into a polypeptide chain. The nascent polypeptides leave the ribosome through a tunnel in the LSU and interact with protein factors that function in enzymatic processing, targeting, and the membrane insertion of nascent chains at the exit of the ribosomal tunnel. The polypeptide is Large ribosomal subunit protein uL13C (rpl1603) (Schizosaccharomyces pombe (strain 972 / ATCC 24843) (Fission yeast)).